We begin with the raw amino-acid sequence, 1227 residues long: JNK-interacting protein 3 (1227 aa).

The disordered stretch occupies residues 1–22 (MMDNDDALLNNGGPQSGAETVY). Residues 25–113 (EDNNMVMSEK…VTQYEREKSA (89 aa)) form the RH1 domain. Residues 84–191 (RINQEQDVEV…TELFKNHVDY (108 aa)) are a coiled coil. A disordered region spans residues 281-323 (DALQQQHHATSPQSPDSSPVVPNVPTNVGRSTTKKEQRSDNNL). Residues 290–308 (TSPQSPDSSPVVPNVPTNV) are compositionally biased toward low complexity. Positions 363 to 489 (GKEVENLIME…EAVRLTEILR (127 aa)) form a coiled coil. An RH2 domain is found at 453–524 (RKRFTRVEMA…PSNRPTERVA (72 aa)). 3 disordered regions span residues 517–572 (NRPT…HPAS), 804–851 (GKVE…AEEP), and 863–889 (PLPG…SSSN). Gly residues predominate over residues 526 to 540 (GLGGGPMFRHTGGGS). Low complexity predominate over residues 541 to 550 (PAHSHGSPSR). The span at 807–817 (EFVRVKPKSDD) shows a compositional bias: basic and acidic residues. Positions 814-849 (KSDDEQNSNEKQQQEEEEAKEATEKSNEQLPAVSAE) form a coiled coil. Residues 879-889 (NNNNNSSSSSN) are compositionally biased toward low complexity.

Belongs to the JIP scaffold family. In terms of assembly, forms homo- and heterooligomeric complexes. Binds the TPR motif-containing C-terminal of kinesin light chain, Klc. Pre-assembled syd scaffolding complexes are then transported as a cargo of kinesin, to the required subcellular location.

It localises to the cytoplasm. The JNK-interacting protein (JIP) group of scaffold proteins selectively mediates JNK-signaling by aggregating specific components of the MAPK cascade to form a functional JNK signaling module. May function as a regulator of vesicle transport, through interactions with the JNK-signaling components and motor proteins. Syd is required for efficient kinesin-I mediated axonal transport. The chain is JNK-interacting protein 3 (syd) from Drosophila melanogaster (Fruit fly).